Reading from the N-terminus, the 556-residue chain is PPE family protein PPE2 (556 aa).

Positions 8 to 164 are PPE; the sequence is ASPPEVHSAL…ASYQAVSTAA (157 aa). Residues 201-256 form an SH3-like region; that stretch reads QKIGYTDFYNNVIQPFINWLTNLPFLQAMFSGFDPWLPSLGNPLTFLSPANIAFAL. The segment at 319–340 is leucine zipper motif; it reads LEQTLALLPAALPLLAAPLAPL. 2 disordered regions span residues 385–418 and 443–556; these read TPTPAPAPAPTAVTAPTPPPGPPPPPVTAPPPVT and GTGV…TRVE. Residues 400–417 show a composition bias toward pro residues; that stretch reads PTPPPGPPPPPVTAPPPV. Over residues 456–471 the composition is skewed to low complexity; it reads AEAPAAAAAPEEQVQP. Over residues 472 to 481 the composition is skewed to basic residues; sequence QRRRRPKIKQ. The Nuclear localization signal motif lies at 473–481; that stretch reads RRRRPKIKQ.

Belongs to the mycobacterial PPE family.

It localises to the secreted. It is found in the host cytoplasm. The protein localises to the host nucleus. Functionally, inhibits nitric oxide (NO) production in activated macrophages. Acts by inhibiting expression of the host inducible nitric oxide synthase (iNOS). PPE2 is translocated into the host macrophage nucleus, where it interacts with a GATA-binding site overlapping with the TATA box of NOS2 (iNOS) promoter, and strongly inhibits NOS2 gene transcription. Reduction in NO production in turn facilitates intracellular survival of the bacilli inside the macrophage. In addition, disrupts the assembly of NADPH oxidase complex, which inhibits NADPH oxidase-mediated reactive oxygen species (ROS) generation in macrophages and favors M.tuberculosis survival. Acts by interacting with NCF2, the cytosolic subunit of NADPH oxidase, and preventing translocation of NCF2 and NCF1 to the membrane, which causes a reduction of the functional assembly of NADPH oxidase complex and a decrease in NADPH oxidase activity. The sequence is that of PPE family protein PPE2 (PPE2) from Mycobacterium tuberculosis (strain ATCC 25618 / H37Rv).